A 217-amino-acid chain; its full sequence is Small ribosomal subunit protein uS3 (217 aa).

Residues 40 to 110 (IRDLINKGFN…EVYINIHEVR (71 aa)) form the KH type-2 domain.

Belongs to the universal ribosomal protein uS3 family. As to quaternary structure, part of the 30S ribosomal subunit. Forms a tight complex with proteins S10 and S14.

In terms of biological role, binds the lower part of the 30S subunit head. Binds mRNA in the 70S ribosome, positioning it for translation. The polypeptide is Small ribosomal subunit protein uS3 (Rickettsia africae (strain ESF-5)).